A 274-amino-acid polypeptide reads, in one-letter code: 2-dehydro-3-deoxyphosphooctonate aldolase (274 aa).

The protein belongs to the KdsA family.

Its subcellular location is the cytoplasm. The catalysed reaction is D-arabinose 5-phosphate + phosphoenolpyruvate + H2O = 3-deoxy-alpha-D-manno-2-octulosonate-8-phosphate + phosphate. The protein operates within carbohydrate biosynthesis; 3-deoxy-D-manno-octulosonate biosynthesis; 3-deoxy-D-manno-octulosonate from D-ribulose 5-phosphate: step 2/3. It participates in bacterial outer membrane biogenesis; lipopolysaccharide biosynthesis. In Rickettsia bellii (strain OSU 85-389), this protein is 2-dehydro-3-deoxyphosphooctonate aldolase.